The chain runs to 605 residues: MGIIRELPEQLANRIAAGEVVERPASVVKELVENAIDAGATKVDVDLQEAGIRLIKVRDNGHGFHEEDAARAFLRHATSKIRDEHDLFRIRTLGFRGEALASIASVSHVLLKSKRADEDGFEMTLEGGVVKETNPTATNVGTEIAVSQLFFNTPARLKYLKTSATELASITDTLNRLALSHPEIRFTVFHEEKELLRTNGNGDLKQVMLAIYGRQVAAQIVTASSKTSDYTLSAHLVRPEVTRSNKQYVTLILNGRSIKNFALTQSVLEGYHTLLPIGRYPIAVLEVKMDPMLIDVNVHPTKREVRLSKEKELCQLIRETVQLTLREQRLIPSVKQEPKLKRVTPSEQSKLDFSMEPQPKQADSVEWNYPIPRERKETLTSPSQWNPAPLVHEPEAEMIEPEQVEESVRQSERLPALDVIGQLHSSYIICGAEDGMYVMDQHAAQERIKYELFYEQLGRPEKEYQLLLIPLTLEFTQEETLAIEEVLPLLAEAGITLEPFGGNTFLVREIPTWYPQHDLEGTIRDLVEMAIQQRSIDIAKYREEASILMACKRSIKANHPLNMEMMRQLIDDLSRTTSPFTCPHGRPILVKWSTYELEKLFKRVM.

Belongs to the DNA mismatch repair MutL/HexB family.

Its function is as follows. This protein is involved in the repair of mismatches in DNA. It is required for dam-dependent methyl-directed DNA mismatch repair. May act as a 'molecular matchmaker', a protein that promotes the formation of a stable complex between two or more DNA-binding proteins in an ATP-dependent manner without itself being part of a final effector complex. This is DNA mismatch repair protein MutL from Exiguobacterium sp. (strain ATCC BAA-1283 / AT1b).